The following is a 315-amino-acid chain: tRNA dimethylallyltransferase (315 aa).

ATP is bound at residue 11–18 (GPTASGKS). Residue 13-18 (TASGKS) coordinates substrate. Interaction with substrate tRNA regions lie at residues 36 to 39 (DSMQ) and 160 to 164 (QRLIR).

This sequence belongs to the IPP transferase family. Monomer. Mg(2+) serves as cofactor.

It catalyses the reaction adenosine(37) in tRNA + dimethylallyl diphosphate = N(6)-dimethylallyladenosine(37) in tRNA + diphosphate. Its function is as follows. Catalyzes the transfer of a dimethylallyl group onto the adenine at position 37 in tRNAs that read codons beginning with uridine, leading to the formation of N6-(dimethylallyl)adenosine (i(6)A). This is tRNA dimethylallyltransferase from Rickettsia bellii (strain OSU 85-389).